The sequence spans 326 residues: MAPFVPYHYSAGQSTIVKFGGLLTTEFLEPPPGRCFLFRQTYRHTIEGSIPENLRKLINSPDRPKGPPPHFHQFQTEYFRVENGVLGISVDGVVRRITPEDGEISVKAGSVHNFFIHPDSPENMTVYLSASDSGNDYQLDRVFFENWYGYWHDALLHDGGIDWIQFLAIQDGGDAYTPAPAWVPFRRQVGYWTCVIVGRWIGGLLGYKPFFREYTTDWDFAVAKMKGSFFQRHLVHAAFEEEKSWTKQAELEPKGKPENAEFEPWTEDMSPAPLSLGPVAYEQGLFHGVQPGSVNGSNGHSTGVESKLEQLGSRAQRRVVIDDAGK.

The segment at 287 to 326 is disordered; sequence HGVQPGSVNGSNGHSTGVESKLEQLGSRAQRRVVIDDAGK. The span at 292–304 shows a compositional bias: polar residues; sequence GSVNGSNGHSTGV.

This sequence belongs to the oxidoreductase OpS7 family.

It is found in the vacuole lumen. It localises to the cytoplasmic vesicle lumen. The protein operates within mycotoxin biosynthesis; patulin biosynthesis. Its function is as follows. Probable oxidoreductase; part of the gene cluster that mediates the biosynthesis of patulin, an acetate-derived tetraketide mycotoxin produced by several fungal species that shows antimicrobial properties against several bacteria. PatJ acts with patO in the vacuole to convert gentisyl alcohol to isoepoxydon. The pathway begins with the synthesis of 6-methylsalicylic acid by the polyketide synthase (PKS) patK via condensation of acetate and malonate units. The 6-methylsalicylic acid decarboxylase patG then catalyzes the decarboxylation of 6-methylsalicylic acid to yield m-cresol (also known as 3-methylphenol). These first reactions occur in the cytosol. The intermediate m-cresol is then transported into the endoplasmic reticulum where the cytochrome P450 monooxygenase patH converts it to m-hydroxybenzyl alcohol, which is further converted to gentisyl alcohol by the cytochrome P450 monooxygenase patI. The oxidoreductases patJ and patO further convert gentisyl alcohol to isoepoxydon in the vacuole. PatN catalyzes then the transformation of isoepoxydon into phyllostine. The cluster protein patF is responsible for the conversion from phyllostine to neopatulin whereas the alcohol dehydrogenase patD converts neopatulin to E-ascladiol. The steps between isoepoxydon and E-ascladiol occur in the cytosol, and E-ascladiol is probably secreted to the extracellular space by one of the cluster-specific transporters patC or patM. Finally, the secreted patulin synthase patE catalyzes the conversion of E-ascladiol to patulin. This Penicillium expansum (Blue mold rot fungus) protein is Probable oxidoreductase patJ.